The sequence spans 348 residues: Ion-translocating oxidoreductase complex subunit D (348 aa).

The next 5 membrane-spanning stretches (helical) occupy residues 19 to 39, 41 to 61, 66 to 86, 87 to 107, and 122 to 142; these read FMLW…AFFG, GVVI…IVVA, KSTT…ILAM, AIPP…ALLL, and PAMV…TSWL. An FMN phosphoryl threonine modification is found at Thr186. 5 consecutive transmembrane segments (helical) span residues 212–232, 236–256, 265–285, 291–311, and 315–335; these read IFAR…LFLL, IIHW…SALT, LNVL…FIAT, SITP…AYLI, and GSYP…VPLI.

The protein belongs to the NqrB/RnfD family. As to quaternary structure, the complex is composed of six subunits: RnfA, RnfB, RnfC, RnfD, RnfE and RnfG. The cofactor is FMN.

It localises to the cell inner membrane. Its function is as follows. Part of a membrane-bound complex that couples electron transfer with translocation of ions across the membrane. The sequence is that of Ion-translocating oxidoreductase complex subunit D from Haemophilus ducreyi (strain 35000HP / ATCC 700724).